Reading from the N-terminus, the 459-residue chain is UDP-N-acetylmuramate--L-alanine ligase (459 aa).

113–119 contributes to the ATP binding site; sequence GSHGKTS.

It belongs to the MurCDEF family.

The protein resides in the cytoplasm. The catalysed reaction is UDP-N-acetyl-alpha-D-muramate + L-alanine + ATP = UDP-N-acetyl-alpha-D-muramoyl-L-alanine + ADP + phosphate + H(+). It functions in the pathway cell wall biogenesis; peptidoglycan biosynthesis. Functionally, cell wall formation. The sequence is that of UDP-N-acetylmuramate--L-alanine ligase from Desulfotalea psychrophila (strain LSv54 / DSM 12343).